Consider the following 220-residue polypeptide: Ribonuclease HII (220 aa).

The 189-residue stretch at Lys32 to Cys220 folds into the RNase H type-2 domain. Residues Asp38, Glu39, and Asp130 each coordinate a divalent metal cation.

The protein belongs to the RNase HII family. Mn(2+) is required as a cofactor. Requires Mg(2+) as cofactor.

It is found in the cytoplasm. The enzyme catalyses Endonucleolytic cleavage to 5'-phosphomonoester.. In terms of biological role, endonuclease that specifically degrades the RNA of RNA-DNA hybrids. The protein is Ribonuclease HII of Brucella ovis (strain ATCC 25840 / 63/290 / NCTC 10512).